A 35-amino-acid polypeptide reads, in one-letter code: CRVENKCPHTVCCDRSRCSCKLIRTRPLMYHVCVC.

At Pro-8 the chain carries 4-hydroxyproline.

Contains 4 disulfide bonds. Expressed by the venom duct.

It is found in the secreted. In Conus caracteristicus (Characteristic cone), this protein is Conotoxin Ca15a.